A 212-amino-acid polypeptide reads, in one-letter code: Thymidylate kinase (212 aa).

ATP is bound at residue 10–17; it reads GLEGAGKT.

This sequence belongs to the thymidylate kinase family.

It catalyses the reaction dTMP + ATP = dTDP + ADP. In terms of biological role, phosphorylation of dTMP to form dTDP in both de novo and salvage pathways of dTTP synthesis. This Serratia proteamaculans (strain 568) protein is Thymidylate kinase.